A 586-amino-acid chain; its full sequence is MEGSNCSLRVNRQLLDPKFESYKLSLDPLPCYNVELDAAVAEVCLRDDQYTLDHMRAFGMYNYLHCNPWIPNSVFYVDQLERVMSFTVTLDTAMGKPIEVFRFPRDLNTCDSRLCSSMYFASAQWVTLSDGTGTLYIIRIGNQSGSVSGKWEIMFNQELGEPFIVVHSVSSVRDELHIIDVLLLSIEKDESDIKGSGFHVCLEWVSIARAQNEDNGKYEILKRRKLFGKSVPHYAAIEPLGNGVMMISYKPFRFIANDKDQPESSEDEKMDEDNKREPLYNWHQTGEDVTLTFQLPEGMTKEDLTIKFLPGEIDISLKDQGTFLKGQLYLDIDCESSAWIIKEGRSVEVTLTKREPGSTWAELVIGDKHGEYIVDPTQTAAIAEQLMHLTSEDMNPNPETEKPPCNAQELEECDLFLEDSTSLCRFDGARLKATHVVNLGSNPYLFTFVATPELMPCFALRHDVDALLWQPVSEQADNLWDHIATFNALGYVQASKQDKKFFTCAPNFSYSALCECVRRIFIYRQPTPVSTELYNRKEGRRVGQVAKQQVASLETTDPIVGFQASNERLFVLTTKKLSVIKVNSTD.

The segment at 259-278 (KDQPESSEDEKMDEDNKREP) is disordered. Positions 275–364 (KREPLYNWHQ…EPGSTWAELV (90 aa)) constitute a CS domain.

The protein localises to the cytoplasm. It is found in the nucleus. This is NudC domain-containing protein 1 from Xenopus tropicalis (Western clawed frog).